A 133-amino-acid chain; its full sequence is Peptide methionine sulfoxide reductase MsrB (133 aa).

One can recognise a MsrB domain in the interval 8 to 130 (LDVWRELLSD…NSASLRLKPR (123 aa)). Positions 47, 50, 96, and 99 each coordinate Zn(2+). Cys119 serves as the catalytic Nucleophile.

The protein belongs to the MsrB Met sulfoxide reductase family. Zn(2+) is required as a cofactor.

The catalysed reaction is L-methionyl-[protein] + [thioredoxin]-disulfide + H2O = L-methionyl-(R)-S-oxide-[protein] + [thioredoxin]-dithiol. The protein is Peptide methionine sulfoxide reductase MsrB of Azotobacter vinelandii (strain DJ / ATCC BAA-1303).